The chain runs to 389 residues: Succinate--CoA ligase [ADP-forming] subunit beta (389 aa).

An ATP-grasp domain is found at Lys-9–Lys-236. ATP contacts are provided by residues Lys-45, Gly-52–Gly-54, Ser-94, and Glu-99. 2 residues coordinate Mg(2+): Asn-191 and Asp-205. Substrate contacts are provided by residues Asn-256 and Gly-318–Thr-320.

The protein belongs to the succinate/malate CoA ligase beta subunit family. As to quaternary structure, heterotetramer of two alpha and two beta subunits. It depends on Mg(2+) as a cofactor.

The enzyme catalyses succinate + ATP + CoA = succinyl-CoA + ADP + phosphate. The catalysed reaction is GTP + succinate + CoA = succinyl-CoA + GDP + phosphate. Its pathway is carbohydrate metabolism; tricarboxylic acid cycle; succinate from succinyl-CoA (ligase route): step 1/1. Its function is as follows. Succinyl-CoA synthetase functions in the citric acid cycle (TCA), coupling the hydrolysis of succinyl-CoA to the synthesis of either ATP or GTP and thus represents the only step of substrate-level phosphorylation in the TCA. The beta subunit provides nucleotide specificity of the enzyme and binds the substrate succinate, while the binding sites for coenzyme A and phosphate are found in the alpha subunit. The polypeptide is Succinate--CoA ligase [ADP-forming] subunit beta (Mycobacteroides abscessus (strain ATCC 19977 / DSM 44196 / CCUG 20993 / CIP 104536 / JCM 13569 / NCTC 13031 / TMC 1543 / L948) (Mycobacterium abscessus)).